The primary structure comprises 542 residues: Chaperonin GroEL (542 aa).

ATP-binding positions include 29–32 (TLGP), Lys-50, 86–90 (DGTTT), Gly-415, and Asp-495.

Belongs to the chaperonin (HSP60) family. Forms a cylinder of 14 subunits composed of two heptameric rings stacked back-to-back. Interacts with the co-chaperonin GroES.

It localises to the cytoplasm. It carries out the reaction ATP + H2O + a folded polypeptide = ADP + phosphate + an unfolded polypeptide.. Functionally, together with its co-chaperonin GroES, plays an essential role in assisting protein folding. The GroEL-GroES system forms a nano-cage that allows encapsulation of the non-native substrate proteins and provides a physical environment optimized to promote and accelerate protein folding. The sequence is that of Chaperonin GroEL from Flavobacterium psychrophilum (strain ATCC 49511 / DSM 21280 / CIP 103535 / JIP02/86).